The sequence spans 321 residues: Lipoyl synthase (321 aa).

Residues cysteine 68, cysteine 73, cysteine 79, cysteine 94, cysteine 98, cysteine 101, and serine 308 each coordinate [4Fe-4S] cluster. The 218-residue stretch at 80-297 (FNHGTATFMI…REFAESIGFT (218 aa)) folds into the Radical SAM core domain.

This sequence belongs to the radical SAM superfamily. Lipoyl synthase family. It depends on [4Fe-4S] cluster as a cofactor.

Its subcellular location is the cytoplasm. It carries out the reaction [[Fe-S] cluster scaffold protein carrying a second [4Fe-4S](2+) cluster] + N(6)-octanoyl-L-lysyl-[protein] + 2 oxidized [2Fe-2S]-[ferredoxin] + 2 S-adenosyl-L-methionine + 4 H(+) = [[Fe-S] cluster scaffold protein] + N(6)-[(R)-dihydrolipoyl]-L-lysyl-[protein] + 4 Fe(3+) + 2 hydrogen sulfide + 2 5'-deoxyadenosine + 2 L-methionine + 2 reduced [2Fe-2S]-[ferredoxin]. Its pathway is protein modification; protein lipoylation via endogenous pathway; protein N(6)-(lipoyl)lysine from octanoyl-[acyl-carrier-protein]: step 2/2. Functionally, catalyzes the radical-mediated insertion of two sulfur atoms into the C-6 and C-8 positions of the octanoyl moiety bound to the lipoyl domains of lipoate-dependent enzymes, thereby converting the octanoylated domains into lipoylated derivatives. This is Lipoyl synthase from Shewanella sediminis (strain HAW-EB3).